Reading from the N-terminus, the 480-residue chain is ESX-1 secretion system ATPase EccB1 (480 aa).

Residues 44 to 64 (IALGIVVAVLILAGAALLAYF) traverse the membrane as a helical segment. The disordered stretch occupies residues 461 to 480 (DTLPADPSPRKVPAGASGAP).

Belongs to the EccB family. In terms of assembly, part of the ESX-1 / type VII secretion system (T7SS), which is composed of cytosolic and membrane components. The ESX-1 membrane complex is composed of EccB1, EccCa1, EccCb1, EccD1 and EccE1.

It localises to the cell inner membrane. Its function is as follows. An ATPase. Part of the ESX-1 specialized secretion system, which delivers several virulence factors to host cells during infection, including the key virulence factors EsxA (ESAT-6) and EsxB (CFP-10). The polypeptide is ESX-1 secretion system ATPase EccB1 (Mycobacterium tuberculosis (strain CDC 1551 / Oshkosh)).